Here is a 219-residue protein sequence, read N- to C-terminus: Mediator of RNA polymerase II transcription subunit 7 (219 aa).

A disordered region spans residues 173 to 203; that stretch reads LPDPAESDRLNSTVEPMDTGDDGEAGKSRGE.

It belongs to the Mediator complex subunit 7 family. As to quaternary structure, component of the Mediator complex.

The protein resides in the nucleus. Functionally, component of the Mediator complex, a coactivator involved in the regulated transcription of nearly all RNA polymerase II-dependent genes. Mediator functions as a bridge to convey information from gene-specific regulatory proteins to the basal RNA polymerase II transcription machinery. Mediator is recruited to promoters by direct interactions with regulatory proteins and serves as a scaffold for the assembly of a functional preinitiation complex with RNA polymerase II and the general transcription factors. This chain is Mediator of RNA polymerase II transcription subunit 7 (MED7), found in Aedes aegypti (Yellowfever mosquito).